The chain runs to 695 residues: Cysteine-rich receptor-like protein kinase 6 (695 aa).

Positions 1-31 (MRRHRPYLDGVAAAAATFLLAVLLHAPLAAG) are cleaved as a signal peptide. The Extracellular portion of the chain corresponds to 32–294 (EDEPPPWVLC…ATSGEKTKNR (263 aa)). Gnk2-homologous domains follow at residues 38-142 (WVLC…NRDF) and 151-261 (TTYT…VFPF). 4 N-linked (GlcNAc...) asparagine glycosylation sites follow: asparagine 49, asparagine 53, asparagine 70, and asparagine 101. 2 disulfides stabilise this stretch: cysteine 96–cysteine 105 and cysteine 108–cysteine 133. An N-linked (GlcNAc...) asparagine glycan is attached at asparagine 178. 2 cysteine pairs are disulfide-bonded: cysteine 215–cysteine 224 and cysteine 227–cysteine 252. A helical membrane pass occupies residues 295 to 315 (IGTVLAIVMPAIAAILLMVVA). Residues 316–695 (CFCCWKRIKK…DLSITELVPR (380 aa)) are Cytoplasmic-facing. The Protein kinase domain occupies 363–634 (FADTKMIGQG…PTISSVNIML (272 aa)). Residues 369–377 (IGQGGFGMV) and lysine 391 contribute to the ATP site. Catalysis depends on aspartate 488, which acts as the Proton acceptor. The segment at 658–682 (DSSNPYSERYPRPRHSGYSDNSTVV) is disordered.

Belongs to the protein kinase superfamily. Ser/Thr protein kinase family. CRK subfamily.

It localises to the membrane. In terms of biological role, involved in disease resistance. Required for NPR1/NH1-mediated immunity to the bacterial blight pathogen Xanthomomas oryzae pv. oryzae (Xoo). Required for the benzothiadiazole (BTH)-induced immune response. Possesses kinase activity in vitro. The protein is Cysteine-rich receptor-like protein kinase 6 of Oryza sativa subsp. japonica (Rice).